Here is a 545-residue protein sequence, read N- to C-terminus: Serine/threonine-protein kinase PAK 1 (545 aa).

The disordered stretch occupies residues 1–75 (MSNNGVDIQD…KKREKERPEI (75 aa)). S2 carries the post-translational modification N-acetylserine. S21 carries the phosphoserine; by PKB and autocatalysis modification. S57 bears the Phosphoserine; by autocatalysis mark. Positions 70 to 140 (KERPEISLPS…YNSKKTSNSK (71 aa)) are autoregulatory region. The region spanning 75–88 (ISLPSDFEHTIHVG) is the CRIB domain. Residues 75–105 (ISLPSDFEHTIHVGFDAVTGEFTGMPEQWAR) form a GTPase-binding region. Position 84 is a phosphothreonine; by OXSR1 (T84). A Phosphoserine modification is found at S115. Residues Y131 and Y142 each carry the phosphotyrosine modification. Phosphoserine; by autocatalysis is present on residues S144 and S149. Residues 150-198 (AEDYNSSNTLNVKTVSETPAVPPVSEDDEDDDDDATPPPVIAPRPEHTK) form a disordered region. Polar residues predominate over residues 152-166 (DYNSSNTLNVKTVSE). Y153 is subject to Phosphotyrosine; by JAK2. Phosphoserine is present on S174. Acidic residues predominate over residues 174-184 (SEDDEDDDDDA). T185 is modified (phosphothreonine). S199 carries the post-translational modification Phosphoserine; by autocatalysis. Phosphotyrosine; by JAK2 is present on Y201. S204 bears the Phosphoserine; by autocatalysis mark. The interval 210 to 250 (PVTPTRDVATSPISPTENNTTPPDALTRNTEKQKKKPKMSD) is disordered. Residues T212 and T219 each carry the phosphothreonine modification. 2 positions are modified to phosphoserine: S220 and S223. Residues 220–231 (SPISPTENNTTP) are compositionally biased toward polar residues. Phosphothreonine is present on residues T225, T229, and T230. The Protein kinase domain maps to 270–521 (YTPFEKIGQG…AKELLQHQFL (252 aa)). 276 to 284 (IGQGASGTV) is a binding site for ATP. A Phosphotyrosine; by JAK2 modification is found at Y285. K299 is a binding site for ATP. D389 serves as the catalytic Proton acceptor. A Phosphothreonine; by autocatalysis, BRSK2 and PDPK1 modification is found at T423.

It belongs to the protein kinase superfamily. STE Ser/Thr protein kinase family. STE20 subfamily. Homodimer in its autoinhibited state. Active as monomer. Interacts with GIT1. Component of cytoplasmic complexes, which also contains PXN, ARHGEF7 and GIT1. Interacts with NISCH. Interacts with DVL1; mediates the formation of a DVL1, MUSK and PAK1 ternary complex involved in AChR clustering. Binds to the caspase-cleaved p110 isoform of CDC2L1 and CDC2L2, p110C, but not the full-length proteins. Interacts with ARHGEF7. Interacts tightly with GTP-bound but not GDP-bound CDC42/P21 and RAC1. Interacts with SCRIB. Interacts with PDPK1. Interacts (via kinase domain) with RAF1. Interacts with NCK1 and NCK2. Interacts with TBCB. Interacts with BRSK2. Interacts with SNAI1. Interacts with CIB1 (via N-terminal region); the interaction is direct, promotes PAK1 activity and occurs in a calcium-dependent manner. Interacts with INPP5K. Interacts with gamma-tubulin. Interacts with RHOU; the interaction promotes PAK1 activation. Requires Mg(2+) as cofactor. Post-translationally, autophosphorylated in trans, meaning that in a dimer, one kinase molecule phosphorylates the other one. Activated by autophosphorylation at Thr-423 in response to a conformation change, triggered by interaction with GTP-bound CDC42 or RAC1. Activated by phosphorylation at Thr-423 by BRSK2 and by PDPK1. Phosphorylated by JAK2 in response to PRL; this increases PAK1 kinase activity. Phosphorylated at Ser-21 by PKB/AKT; this reduces interaction with NCK1 and association with focal adhesion sites. Upon DNA damage, phosphorylated at Thr-212 and translocates to the nucleoplasm. Phosphorylated at tyrosine residues, which can be enhanced by NTN1.

It is found in the cytoplasm. The protein localises to the cell junction. It localises to the focal adhesion. Its subcellular location is the cell projection. The protein resides in the lamellipodium. It is found in the cell membrane. The protein localises to the ruffle membrane. It localises to the invadopodium. Its subcellular location is the nucleus. The protein resides in the nucleoplasm. It is found in the chromosome. The protein localises to the cytoskeleton. It localises to the microtubule organizing center. Its subcellular location is the centrosome. It catalyses the reaction L-seryl-[protein] + ATP = O-phospho-L-seryl-[protein] + ADP + H(+). It carries out the reaction L-threonyl-[protein] + ATP = O-phospho-L-threonyl-[protein] + ADP + H(+). Its activity is regulated as follows. Phosphorylation of Thr-84 by OXSR1 inhibits activation. Activated by binding small G proteins. Binding of GTP-bound CDC42 or RAC1 to the autoregulatory region releases monomers from the autoinhibited dimer, and enables activation by phosphorylation of Thr-423. Functionally, protein kinase involved in intracellular signaling pathways downstream of integrins and receptor-type kinases that plays an important role in cytoskeleton dynamics, in cell adhesion, migration, proliferation, apoptosis, mitosis, and in vesicle-mediated transport processes. Can directly phosphorylate BAD and protects cells against apoptosis. Activated by interaction with CDC42 and RAC1. Functions as a GTPase effector that links the Rho-related GTPases CDC42 and RAC1 to the JNK MAP kinase pathway. Phosphorylates and activates MAP2K1, and thereby mediates activation of downstream MAP kinases. Involved in the reorganization of the actin cytoskeleton, actin stress fibers and of focal adhesion complexes. Phosphorylates the tubulin chaperone TBCB and thereby plays a role in the regulation of microtubule biogenesis and organization of the tubulin cytoskeleton. Plays a role in the regulation of insulin secretion in response to elevated glucose levels. Part of a ternary complex that contains PAK1, DVL1 and MUSK that is important for MUSK-dependent regulation of AChR clustering during the formation of the neuromuscular junction (NMJ). Activity is inhibited in cells undergoing apoptosis, potentially due to binding of CDC2L1 and CDC2L2. Phosphorylates MYL9/MLC2. Phosphorylates RAF1 at 'Ser-338' and 'Ser-339' resulting in: activation of RAF1, stimulation of RAF1 translocation to mitochondria, phosphorylation of BAD by RAF1, and RAF1 binding to BCL2. Phosphorylates SNAI1 at 'Ser-246' promoting its transcriptional repressor activity by increasing its accumulation in the nucleus. In podocytes, promotes NR3C2 nuclear localization. Required for atypical chemokine receptor ACKR2-induced phosphorylation of LIMK1 and cofilin (CFL1) and for the up-regulation of ACKR2 from endosomal compartment to cell membrane, increasing its efficiency in chemokine uptake and degradation. In synapses, seems to mediate the regulation of F-actin cluster formation performed by SHANK3, maybe through CFL1 phosphorylation and inactivation. Plays a role in RUFY3-mediated facilitating gastric cancer cells migration and invasion. In response to DNA damage, phosphorylates MORC2 which activates its ATPase activity and facilitates chromatin remodeling. In neurons, plays a crucial role in regulating GABA(A) receptor synaptic stability and hence GABAergic inhibitory synaptic transmission through its role in F-actin stabilization. In hippocampal neurons, necessary for the formation of dendritic spines and excitatory synapses; this function is dependent on kinase activity and may be exerted by the regulation of actomyosin contractility through the phosphorylation of myosin II regulatory light chain (MLC). Along with GIT1, positively regulates microtubule nucleation during interphase. Phosphorylates FXR1, promoting its localization to stress granules and activity. Phosphorylates ILK on 'Thr-173' and 'Ser-246', promoting nuclear export of ILK. The chain is Serine/threonine-protein kinase PAK 1 from Mus musculus (Mouse).